We begin with the raw amino-acid sequence, 337 residues long: Ketol-acid reductoisomerase (NADP(+)) (337 aa).

The 181-residue stretch at Val-3 to Thr-183 folds into the KARI N-terminal Rossmann domain. Residues Tyr-26–Gln-29, Lys-49, Ser-52, Ser-54, and Asp-84–Gln-87 contribute to the NADP(+) site. The active site involves His-109. Residue Gly-135 coordinates NADP(+). The region spanning Thr-184–Val-329 is the KARI C-terminal knotted domain. Mg(2+) contacts are provided by Asp-192, Glu-196, Glu-228, and Glu-232. Ser-253 contributes to the substrate binding site.

Belongs to the ketol-acid reductoisomerase family. The cofactor is Mg(2+).

The catalysed reaction is (2R)-2,3-dihydroxy-3-methylbutanoate + NADP(+) = (2S)-2-acetolactate + NADPH + H(+). The enzyme catalyses (2R,3R)-2,3-dihydroxy-3-methylpentanoate + NADP(+) = (S)-2-ethyl-2-hydroxy-3-oxobutanoate + NADPH + H(+). It functions in the pathway amino-acid biosynthesis; L-isoleucine biosynthesis; L-isoleucine from 2-oxobutanoate: step 2/4. Its pathway is amino-acid biosynthesis; L-valine biosynthesis; L-valine from pyruvate: step 2/4. In terms of biological role, involved in the biosynthesis of branched-chain amino acids (BCAA). Catalyzes an alkyl-migration followed by a ketol-acid reduction of (S)-2-acetolactate (S2AL) to yield (R)-2,3-dihydroxy-isovalerate. In the isomerase reaction, S2AL is rearranged via a Mg-dependent methyl migration to produce 3-hydroxy-3-methyl-2-ketobutyrate (HMKB). In the reductase reaction, this 2-ketoacid undergoes a metal-dependent reduction by NADPH to yield (R)-2,3-dihydroxy-isovalerate. The protein is Ketol-acid reductoisomerase (NADP(+)) of Mycolicibacterium vanbaalenii (strain DSM 7251 / JCM 13017 / BCRC 16820 / KCTC 9966 / NRRL B-24157 / PYR-1) (Mycobacterium vanbaalenii).